Reading from the N-terminus, the 361-residue chain is Chorismate synthase (361 aa).

The NADP(+) site is built by Arg-48 and Arg-54. Residues 125–127, 238–239, Gly-278, 293–297, and Arg-319 each bind FMN; these read RSS, NA, and KPTSS.

It belongs to the chorismate synthase family. Homotetramer. FMNH2 serves as cofactor.

It carries out the reaction 5-O-(1-carboxyvinyl)-3-phosphoshikimate = chorismate + phosphate. It participates in metabolic intermediate biosynthesis; chorismate biosynthesis; chorismate from D-erythrose 4-phosphate and phosphoenolpyruvate: step 7/7. Catalyzes the anti-1,4-elimination of the C-3 phosphate and the C-6 proR hydrogen from 5-enolpyruvylshikimate-3-phosphate (EPSP) to yield chorismate, which is the branch point compound that serves as the starting substrate for the three terminal pathways of aromatic amino acid biosynthesis. This reaction introduces a second double bond into the aromatic ring system. The sequence is that of Chorismate synthase from Shigella flexneri.